Here is a 370-residue protein sequence, read N- to C-terminus: Phosphoserine aminotransferase (370 aa).

Methionine 1 carries the post-translational modification N-acetylmethionine. Histidine 44 and arginine 45 together coordinate O-phospho-L-serine. Position 51 is an N6-acetyllysine (lysine 51). Residues glycine 79 and tryptophan 107 each contribute to the pyridoxal 5'-phosphate site. Lysine 127 is subject to N6-acetyllysine. Residues threonine 156, aspartate 176, and glutamine 199 each coordinate pyridoxal 5'-phosphate. N6-(pyridoxal phosphate)lysine is present on lysine 200. Pyridoxal 5'-phosphate-binding residues include asparagine 241 and threonine 242. N6-acetyllysine occurs at positions 269, 318, and 323. At serine 331 the chain carries Phosphoserine. The residue at position 333 (lysine 333) is an N6-acetyllysine. Histidine 335, arginine 336, and arginine 342 together coordinate O-phospho-L-serine.

The protein belongs to the class-V pyridoxal-phosphate-dependent aminotransferase family. SerC subfamily. In terms of assembly, homodimer. It depends on pyridoxal 5'-phosphate as a cofactor.

The enzyme catalyses O-phospho-L-serine + 2-oxoglutarate = 3-phosphooxypyruvate + L-glutamate. It participates in amino-acid biosynthesis; L-serine biosynthesis; L-serine from 3-phospho-D-glycerate: step 2/3. Its function is as follows. Involved in L-serine biosynthesis via the phosphorylated pathway, a three-step pathway converting the glycolytic intermediate 3-phospho-D-glycerate into L-serine. Catalyzes the second step, that is the pyridoxal 5'-phosphate-dependent transamination of 3-phosphohydroxypyruvate and L-glutamate to O-phosphoserine (OPS) and alpha-ketoglutarate. In Mus musculus (Mouse), this protein is Phosphoserine aminotransferase.